The chain runs to 253 residues: Complement C1q subcomponent subunit B (253 aa).

The signal sequence occupies residues 1 to 27 (MMMKIPWGSIPVLMLLLLLGLIDISQA). Gln28 is modified (pyrrolidone carboxylic acid). Residues Pro35, Pro38, Pro41, Pro53, and Pro56 each carry the 4-hydroxyproline modification. Collagen-like domains are found at residues 37 to 86 (IPGI…PGNP) and 60 to 114 (GEKG…GESG). The tract at residues 38 to 115 (PGIPGIPGTP…APGPKGESGD (78 aa)) is disordered. 5-hydroxylysine is present on residues Lys59 and Lys62. At Pro65 the chain carries 4-hydroxyproline. The span at 70 to 79 (DHGEFGEKGD) shows a compositional bias: basic and acidic residues. Lys77 bears the 5-hydroxylysine mark. Residues 80–92 (PGIPGNPGKVGPK) are compositionally biased toward low complexity. Pro83 and Pro86 each carry 4-hydroxyproline. 2 positions are modified to 5-hydroxylysine: Lys92 and Lys98. Gly residues predominate over residues 96–105 (GPKGGPGAPG). 4-hydroxyproline is present on residues Pro101, Pro104, and Pro107. 5-hydroxylysine is present on Lys110. Residues 117–253 (KATQKIAFSA…GFLLFPDMEA (137 aa)) enclose the C1q domain. A disulfide bridge connects residues Cys181 and Cys198. Ca(2+) is bound by residues Asp199, Tyr200, and Gln206.

In terms of assembly, core component of the complement C1 complex, a calcium-dependent complex composed of 1 molecule of the C1Q subcomplex, 2 molecules of C1R and 2 molecules of C1S. The C1Q subcomplex is composed 18 subunits: 3 chains of C1QA, C1QB, and C1QC trimerize to form 6 collagen-like triple helices connected to six globular ligand-recognition modules (C1q domain). Post-translationally, hydroxylated on lysine and proline residues. Hydroxylated lysine residues can be glycosylated. Human C1Q contains up to 68.3 hydroxylysine-galactosylglucose residues and up to 2.5 hydroxylysine-galactose per molecule. Total percentage hydroxylysine residues glycosylated is 86.4%.

The protein resides in the secreted. The protein localises to the cell surface. With respect to regulation, the C1Q subcomplex is inhibited by sulfated molecules, such as triterpenoid sulfates, heparan sulfate, or chondroitin sulfates. Its function is as follows. Core component of the complement C1 complex, a multiprotein complex that initiates the classical pathway of the complement system, a cascade of proteins that leads to phagocytosis and breakdown of pathogens and signaling that strengthens the adaptive immune system. The classical complement pathway is initiated by the C1Q subcomplex of the C1 complex, which specifically binds IgG or IgM immunoglobulins complexed with antigens, forming antigen-antibody complexes on the surface of pathogens: C1QA, together with C1QB and C1QC, specifically recognizes and binds the Fc regions of IgG or IgM via its C1q domain. Immunoglobulin-binding activates the proenzyme C1R, which cleaves C1S, initiating the proteolytic cascade of the complement system. The C1Q subcomplex is activated by a hexamer of IgG complexed with antigens, while it is activated by a pentameric IgM. The C1Q subcomplex also recognizes and binds phosphatidylserine exposed on the surface of cells undergoing programmed cell death, possibly promoting activation of the complement system. The chain is Complement C1q subcomponent subunit B from Homo sapiens (Human).